Reading from the N-terminus, the 758-residue chain is Calpain (758 aa).

The region spanning 99–397 is the Calpain catalytic domain; the sequence is LWEDPDFPAN…FSRVEVCHLG (299 aa). Active-site residues include Cys-154, His-313, and Asn-337. The interval 398–562 is domain III; sequence LESLEYNQNF…TSITEQELDE (165 aa). Residues 563-582 form a linker region; it reads DNTNQGLPDDVIEALKLEDT. The interval 583-757 is domain IV; sequence LLDEDQEIEQ…AEDYLRFSVY (175 aa). Ca(2+) is bound by residues Asp-641, Asn-643, Thr-645, His-647, Glu-652, Asp-671, Asp-673, Ser-675, Tyr-677, and Glu-682. EF-hand domains follow at residues 658–693 and 694–729; these read IQAKGWKHIFIKHDVDQSGYFSAYEFREALNDAGYH and VSNRLINAIINRYQDPGTDKISFEDFMLCMVRLKTA.

Belongs to the peptidase C2 family.

With respect to regulation, activated by free cytoplasmic calcium. Functionally, calpains are calcium-activated non-lysosomal thiol-proteases. The polypeptide is Calpain (Schistosoma mansoni (Blood fluke)).